Here is a 141-residue protein sequence, read N- to C-terminus: Hemoglobin subunit alpha (141 aa).

A Globin domain is found at 1–141 (VLSPADKTNV…VSTVLTSKYR (141 aa)). A Phosphoserine modification is found at serine 3. Lysine 7 is subject to N6-succinyllysine. Residue threonine 8 is modified to Phosphothreonine. The residue at position 11 (lysine 11) is an N6-succinyllysine. At lysine 16 the chain carries N6-acetyllysine; alternate. Lysine 16 carries the N6-succinyllysine; alternate modification. Phosphotyrosine is present on tyrosine 24. Serine 35 carries the phosphoserine modification. An N6-succinyllysine modification is found at lysine 40. Position 49 is a phosphoserine (serine 49). Position 58 (histidine 58) interacts with O2. A heme b-binding site is contributed by histidine 87. Position 102 is a phosphoserine (serine 102). Phosphothreonine is present on threonine 108. Phosphoserine is present on residues serine 124 and serine 131. Residues threonine 134 and threonine 137 each carry the phosphothreonine modification. Serine 138 carries the phosphoserine modification.

It belongs to the globin family. In terms of assembly, heterotetramer of two alpha chains and two beta chains. Red blood cells.

Functionally, involved in oxygen transport from the lung to the various peripheral tissues. Hemopressin acts as an antagonist peptide of the cannabinoid receptor CNR1. Hemopressin-binding efficiently blocks cannabinoid receptor CNR1 and subsequent signaling. In Loris tardigradus (Slender loris), this protein is Hemoglobin subunit alpha (HBA).